The following is a 546-amino-acid chain: Chaperonin GroEL (546 aa).

ATP-binding positions include Thr30 to Pro33, Lys51, Asp87 to Thr91, Gly415, Asn479 to Ala481, and Asp495. The tract at residues Asp527–Phe546 is disordered. Residues Gly536 to Phe546 are compositionally biased toward gly residues.

The protein belongs to the chaperonin (HSP60) family. Forms a cylinder of 14 subunits composed of two heptameric rings stacked back-to-back. Interacts with the co-chaperonin GroES.

Its subcellular location is the cytoplasm. The enzyme catalyses ATP + H2O + a folded polypeptide = ADP + phosphate + an unfolded polypeptide.. Together with its co-chaperonin GroES, plays an essential role in assisting protein folding. The GroEL-GroES system forms a nano-cage that allows encapsulation of the non-native substrate proteins and provides a physical environment optimized to promote and accelerate protein folding. This is Chaperonin GroEL from Bordetella petrii (strain ATCC BAA-461 / DSM 12804 / CCUG 43448).